Here is a 234-residue protein sequence, read N- to C-terminus: Nuclear transcription factor Y subunit C-1 (234 aa).

Disordered regions lie at residues 1-20 and 205-234; these read MDTN…PPPP and SVWQ…DGQG. Residues 7-20 show a composition bias toward pro residues; sequence QPPPSAAGIPPPPP. Residues 209-219 are compositionally biased toward low complexity; the sequence is TSTGTGDDVSY. Gly residues predominate over residues 220–234; sequence GSGGSSGQGNLDGQG.

Belongs to the NFYC/HAP5 subunit family. In terms of assembly, heterotrimeric transcription factor composed of three components, NF-YA, NF-YB and NF-YC. NF-YB and NF-YC must interact and dimerize for NF-YA association and DNA binding. As to expression, ubiquitous. Present in etiolated seedlings.

It localises to the nucleus. Its function is as follows. Stimulates the transcription of various genes by recognizing and binding to a CCAAT motif in promoters. The sequence is that of Nuclear transcription factor Y subunit C-1 (NFYC1) from Arabidopsis thaliana (Mouse-ear cress).